The sequence spans 29 residues: HEPCGESCVFIPCITTVVGCSCKNKVCYN.

Positions 1-29 (HEPCGESCVFIPCITTVVGCSCKNKVCYN) form a cross-link, cyclopeptide (His-Asn). 3 cysteine pairs are disulfide-bonded: Cys4–Cys20, Cys8–Cys22, and Cys13–Cys27.

Contains 3 disulfide bonds. In terms of processing, this is a cyclic peptide.

Its function is as follows. Probably participates in a plant defense mechanism. This chain is Cyclotide cter-K, found in Clitoria ternatea (Butterfly pea).